Here is a 791-residue protein sequence, read N- to C-terminus: Biofilm architecture maintenance protein MbaA (791 aa).

An N-terminal signal peptide occupies residues 1 to 23; the sequence is MKLNHRILLLIAPVILLSAAASS. The Periplasmic segment spans residues 24 to 259; sequence YIIYTSQKNA…NAQLHSIQRE (236 aa). A helical membrane pass occupies residues 260–280; it reads LLLSFGVSALVTVLMLLLLLY. The HAMP domain occupies 281–333; sequence RHVINPILHLDKQLEEVENNQRKNIEKLNTDDEIGRLSSRFYAMYSELHSTYQ. The Cytoplasmic portion of the chain corresponds to 281 to 791; sequence RHVINPILHL…FTEPSQSECR (511 aa). One can recognise a GGDEF domain in the interval 368-509; it reads QHIWVMYIDL…GKNQVAYYSQ (142 aa). An EAL domain is found at 518–769; the sequence is RNNIERALRL…EISPWLHASN (252 aa).

The protein resides in the cell inner membrane. In terms of biological role, plays an essential role in the maintenance and the formation of the three-dimensional structure of the biofilms at the later stages of their development. Absence of mbaA promotes the accumulation of larger amount of biomass on the surfaces at later stage of development, results in the overproduction of an extracellular polymeric substance that accumulates in the matrix of biofilms. This yields biofilms lacking the typical structure consisting of pillars of cells separated by fluid filled channels. The protein is Biofilm architecture maintenance protein MbaA (mbaA) of Vibrio cholerae serotype O1 (strain ATCC 39315 / El Tor Inaba N16961).